The sequence spans 20 residues: Unknown protein NF045 from 2D-PAGE (20 aa).

The polypeptide is Unknown protein NF045 from 2D-PAGE (Naegleria fowleri (Brain eating amoeba)).